The chain runs to 320 residues: Apolipoprotein E (320 aa).

Residues 1 to 18 (MKVLWAALLVAFLAGCQG) form the signal peptide. Tandem repeats lie at residues 82–103 (ALME…EQLS), 104–125 (PVAE…ARLG), 126–147 (ADME…AMLG), 148–169 (QSTD…KRLL), 170–191 (RDVD…EGAE), 192–213 (RGVS…ARAA), 214–236 (TVGS…ERLR), and 237–258 (ARME…EQVE). The tract at residues 82–258 (ALMEETMKEL…RLDEVKEQVE (177 aa)) is 8 X 22 AA approximate tandem repeats. At M145 the chain carries Methionine sulfoxide. S149 carries the phosphoserine modification. The LDL and other lipoprotein receptors binding stretch occupies residues 160–170 (HLRKLRKRLLR). 164-167 (LRKR) lines the heparin pocket. The lipid-binding and lipoprotein association stretch occupies residues 212–293 (AATVGSSLAS…SWFEPLVEDM (82 aa)). T214 is a glycosylation site (O-linked (GalNAc...) threonine). 232-239 (GERLRARM) contributes to the heparin binding site. The homooligomerization stretch occupies residues 269-320 (QQMRLQAEAFQARLKSWFEPLVEDMQRQWAGLVEKVQAAVGASTTPVPSDNH). The segment at 281 to 293 (RLKSWFEPLVEDM) is specificity for association with VLDL.

It belongs to the apolipoprotein A1/A4/E family. As to quaternary structure, homotetramer. May interact with ABCA1; functionally associated with ABCA1 in the biogenesis of HDLs. May interact with APP/A4 amyloid-beta peptide; the interaction is extremely stable in vitro but its physiological significance is unclear. May interact with MAPT. May interact with MAP2. In the cerebrospinal fluid, interacts with secreted SORL1. Interacts with PMEL; this allows the loading of PMEL luminal fragment on ILVs to induce fibril nucleation. APOE exists as multiple glycosylated and sialylated glycoforms within cells and in plasma. The extent of glycosylation and sialylation are tissue and context specific. Post-translationally, glycated in plasma VLDL. In terms of processing, phosphorylated by FAM20C in the extracellular medium.

The protein localises to the secreted. It localises to the extracellular space. Its subcellular location is the extracellular matrix. It is found in the extracellular vesicle. The protein resides in the endosome. The protein localises to the multivesicular body. In terms of biological role, APOE is an apolipoprotein, a protein associating with lipid particles, that mainly functions in lipoprotein-mediated lipid transport between organs via the plasma and interstitial fluids. APOE is a core component of plasma lipoproteins and is involved in their production, conversion and clearance. Apolipoproteins are amphipathic molecules that interact both with lipids of the lipoprotein particle core and the aqueous environment of the plasma. As such, APOE associates with chylomicrons, chylomicron remnants, very low density lipoproteins (VLDL) and intermediate density lipoproteins (IDL) but shows a preferential binding to high-density lipoproteins (HDL). It also binds a wide range of cellular receptors including the LDL receptor/LDLR, the LDL receptor-related proteins LRP1, LRP2 and LRP8 and the very low-density lipoprotein receptor/VLDLR that mediate the cellular uptake of the APOE-containing lipoprotein particles. Finally, APOE also has a heparin-binding activity and binds heparan-sulfate proteoglycans on the surface of cells, a property that supports the capture and the receptor-mediated uptake of APOE-containing lipoproteins by cells. A main function of APOE is to mediate lipoprotein clearance through the uptake of chylomicrons, VLDLs, and HDLs by hepatocytes. APOE is also involved in the biosynthesis by the liver of VLDLs as well as their uptake by peripheral tissues ensuring the delivery of triglycerides and energy storage in muscle, heart and adipose tissues. By participating in the lipoprotein-mediated distribution of lipids among tissues, APOE plays a critical role in plasma and tissues lipid homeostasis. APOE is also involved in two steps of reverse cholesterol transport, the HDLs-mediated transport of cholesterol from peripheral tissues to the liver, and thereby plays an important role in cholesterol homeostasis. First, it is functionally associated with ABCA1 in the biogenesis of HDLs in tissues. Second, it is enriched in circulating HDLs and mediates their uptake by hepatocytes. APOE also plays an important role in lipid transport in the central nervous system, regulating neuron survival and sprouting. This is Apolipoprotein E (APOE) from Cebus capucinus (White-faced sapajou).